The sequence spans 31 residues: Cyclotide mech-4 (31 aa).

The cyclopeptide (Gly-Asp) cross-link spans 1–31 (GSIPCGESCVYIPCISSLLGCSCKSKVCYKD). 3 cysteine pairs are disulfide-bonded: C5–C21, C9–C23, and C14–C28.

In terms of processing, this is a cyclic peptide. Post-translationally, contains 3 disulfide bonds.

Functionally, probably participates in a plant defense mechanism (Potential). Binds to and induces leakage in phospholipd membranes, particularly ones containing 1-palmitoyl-2-oleophosphatidylethanolamine (POPE). The protein is Cyclotide mech-4 of Melicytus chathamicus (Chatham Island mahoe).